We begin with the raw amino-acid sequence, 502 residues long: Probable ADP-dependent glucokinase (502 aa).

An N-terminal signal peptide occupies residues 1–32 (MFSETFVPSIFSYKHRLLHLSVLFFIVPYWYS). The 454-residue stretch at 44–497 (SVETAMFLSW…LLYSQFYRLN (454 aa)) folds into the ADPK domain. Residues Asn-89 and Asn-190 are each glycosylated (N-linked (GlcNAc...) asparagine). 3 residues coordinate Mg(2+): Glu-290, Glu-320, and Asp-481. Asp-481 serves as the catalytic Proton acceptor.

This sequence belongs to the ADP-dependent glucokinase family. In terms of assembly, monomer. Mg(2+) serves as cofactor.

It is found in the secreted. The catalysed reaction is D-glucose + ADP = D-glucose 6-phosphate + AMP + H(+). Its pathway is carbohydrate degradation; glycolysis. Catalyzes the phosphorylation of D-glucose to D-glucose 6-phosphate using ADP as the phosphate donor. GDP and CDP can replace ADP, but with reduced efficiency. The sequence is that of Probable ADP-dependent glucokinase from Caenorhabditis elegans.